The following is a 700-amino-acid chain: pH-response regulator protein palI/prr-5 (700 aa).

Topologically, residues 1-8 are cytoplasmic; sequence MLRPATPL. The chain crosses the membrane as a helical span at residues 9 to 29; that stretch reads AVLLFAAFGLLTLATISTPII. Residues 30–90 lie on the Extracellular side of the membrane; the sequence is KQIPLSSFEI…PRATRSTLSS (61 aa). Residues 91-111 traverse the membrane as a helical segment; the sequence is ILIVHPVAALITLINFVLAIV. The Cytoplasmic portion of the chain corresponds to 112–123; that stretch reads AHFHSPSHSARY. A helical membrane pass occupies residues 124–144; it reads LLILFIVSFVDFIVCLLCFLV. The Extracellular portion of the chain corresponds to 145–152; it reads DVLLFIPH. A helical transmembrane segment spans residues 153-173; that stretch reads LSWGSYIVVAATILVAFCGLV. Over 174 to 700 the chain is Cytoplasmic; it reads TCAMRRTLVN…GNMPRAAGPR (527 aa). Disordered regions lie at residues 226–491, 507–560, and 573–700; these read SGAN…GIRD, VPDP…PISE, and DVDP…AGPR. The segment covering 234–252 has biased composition (basic and acidic residues); the sequence is KLPEFTTFEKKDDRSEERI. The span at 320-378 shows a compositional bias: gly residues; it reads GRGGMPPGGYRGRGGFPGPGRGGGPPQNGRGGYGPPGRGRGGYGPPPRGYGGPGPRGGR. The segment covering 414–424 has biased composition (polar residues); sequence SPYANRQQSPG. Polar residues-rich tracts occupy residues 593-603 and 615-637; these read SMQSPPASNSY and ESEN…NSAN. Low complexity predominate over residues 657–671; that stretch reads VVPRRPVNRPGAGPA.

This sequence belongs to the palI/RIM9 family.

It localises to the cell membrane. In terms of biological role, required for the proteolytic cleavage of the transcription factor pacc-1 in response to alkaline ambient pH. The protein is pH-response regulator protein palI/prr-5 (prr-5) of Neurospora crassa (strain ATCC 24698 / 74-OR23-1A / CBS 708.71 / DSM 1257 / FGSC 987).